An 82-amino-acid polypeptide reads, in one-letter code: Small ribosomal subunit protein uS17 (82 aa).

This sequence belongs to the universal ribosomal protein uS17 family. As to quaternary structure, part of the 30S ribosomal subunit.

In terms of biological role, one of the primary rRNA binding proteins, it binds specifically to the 5'-end of 16S ribosomal RNA. This Rickettsia typhi (strain ATCC VR-144 / Wilmington) protein is Small ribosomal subunit protein uS17.